A 396-amino-acid polypeptide reads, in one-letter code: Tryptophan synthase beta chain (396 aa).

Lys-86 bears the N6-(pyridoxal phosphate)lysine mark.

The protein belongs to the TrpB family. In terms of assembly, tetramer of two alpha and two beta chains. Requires pyridoxal 5'-phosphate as cofactor.

The enzyme catalyses (1S,2R)-1-C-(indol-3-yl)glycerol 3-phosphate + L-serine = D-glyceraldehyde 3-phosphate + L-tryptophan + H2O. The protein operates within amino-acid biosynthesis; L-tryptophan biosynthesis; L-tryptophan from chorismate: step 5/5. In terms of biological role, the beta subunit is responsible for the synthesis of L-tryptophan from indole and L-serine. This is Tryptophan synthase beta chain from Aliivibrio fischeri (strain ATCC 700601 / ES114) (Vibrio fischeri).